A 320-amino-acid polypeptide reads, in one-letter code: uncharacterized protein (320 aa).

The 65-residue stretch at 22–86 (KTIGRSSSFD…IRDLNNKTGT (65 aa)) folds into the FHA domain. The segment at 242-264 (TDTDTTEEKEEEEEKEEGDDEEG) is disordered.

This is an uncharacterized protein from Saccharomyces cerevisiae (strain ATCC 204508 / S288c) (Baker's yeast).